Reading from the N-terminus, the 188-residue chain is MNAPAMTSDRLVLREEVLGSRRFSNIWWGTVAAIGGIGFLLAGLSSYLRVNLLIVSDTSQLVFIPQGIALLFYGIAGSALSLYLWFTIILDIGGGYNEFNKETGKVTIFRWGFPGKNRRIEVSYPLADIQAIRADIKEGLNTKRKLYIQLKQRREIPLTRVGRPISLSELENQGAELARFLGVPLEGL.

Helical transmembrane passes span isoleucine 26 to serine 46 and leucine 70 to leucine 90.

Belongs to the Ycf4 family.

The protein resides in the cellular thylakoid membrane. Its function is as follows. Seems to be required for the assembly of the photosystem I complex. This Rippkaea orientalis (strain PCC 8801 / RF-1) (Cyanothece sp. (strain PCC 8801)) protein is Photosystem I assembly protein Ycf4.